We begin with the raw amino-acid sequence, 231 residues long: Large ribosomal subunit protein uL1 (231 aa).

Belongs to the universal ribosomal protein uL1 family. Part of the 50S ribosomal subunit.

In terms of biological role, binds directly to 23S rRNA. The L1 stalk is quite mobile in the ribosome, and is involved in E site tRNA release. Protein L1 is also a translational repressor protein, it controls the translation of the L11 operon by binding to its mRNA. This is Large ribosomal subunit protein uL1 from Pseudomonas fluorescens (strain Pf0-1).